The following is a 608-amino-acid chain: AAA ATPase forming ring-shaped complexes (608 aa).

A coiled-coil region spans residues 45–79 (AQEYDAVLRRLSAAEATRDNMSRQIRGAGEKNRKL). Residue 302–307 (GNGKTM) coordinates ATP.

This sequence belongs to the AAA ATPase family. Homohexamer. Assembles into a hexameric ring structure.

This Rothia mucilaginosa (strain DY-18) (Stomatococcus mucilaginosus) protein is AAA ATPase forming ring-shaped complexes.